We begin with the raw amino-acid sequence, 353 residues long: tRNA-specific 2-thiouridylase MnmA 2 (353 aa).

Residue 6-13 participates in ATP binding; the sequence is LLSGGVDS. The interaction with target base in tRNA stretch occupies residues 92–94; the sequence is NPD. Cys-97 acts as the Nucleophile in catalysis. The cysteines at positions 97 and 192 are disulfide-linked. Gly-120 serves as a coordination point for ATP. Residues 142–144 are interaction with tRNA; it reads KDQ. Cys-192 acts as the Cysteine persulfide intermediate in catalysis.

It belongs to the MnmA/TRMU family.

Its subcellular location is the cytoplasm. The enzyme catalyses S-sulfanyl-L-cysteinyl-[protein] + uridine(34) in tRNA + AH2 + ATP = 2-thiouridine(34) in tRNA + L-cysteinyl-[protein] + A + AMP + diphosphate + H(+). Catalyzes the 2-thiolation of uridine at the wobble position (U34) of tRNA, leading to the formation of s(2)U34. The chain is tRNA-specific 2-thiouridylase MnmA 2 from Bacteroides fragilis (strain YCH46).